Reading from the N-terminus, the 479-residue chain is Poly(A) polymerase catalytic subunit (479 aa).

Residues aspartate 202 and aspartate 204 contribute to the active site. Residues aspartate 202, aspartate 204, and aspartate 253 each contribute to the Ca(2+) site.

The protein belongs to the poxviridae poly(A) polymerase catalytic subunit family. In terms of assembly, heterodimer of a large (catalytic) subunit and a small (regulatory) subunit.

The catalysed reaction is RNA(n) + ATP = RNA(n)-3'-adenine ribonucleotide + diphosphate. In terms of biological role, polymerase that creates the 3'-poly(A) tail of mRNA's. The protein is Poly(A) polymerase catalytic subunit (OPG063) of Cowpox virus (strain GRI-90 / Grishak) (CPV).